The primary structure comprises 88 residues: NADH-ubiquinone oxidoreductase chain 4L (88 aa).

Transmembrane regions (helical) follow at residues 1–21, 22–42, and 55–75; these read MNLS…NRKN, IILM…LVLM, and FSIY…SILV.

The protein belongs to the complex I subunit 4L family.

Its subcellular location is the mitochondrion membrane. The catalysed reaction is a ubiquinone + NADH + 5 H(+)(in) = a ubiquinol + NAD(+) + 4 H(+)(out). Core subunit of the mitochondrial membrane respiratory chain NADH dehydrogenase (Complex I) that is believed to belong to the minimal assembly required for catalysis. Complex I functions in the transfer of electrons from NADH to the respiratory chain. The immediate electron acceptor for the enzyme is believed to be ubiquinone. The polypeptide is NADH-ubiquinone oxidoreductase chain 4L (ND4L) (Schizophyllum commune (Split gill fungus)).